We begin with the raw amino-acid sequence, 991 residues long: MPGVARPPLPLLSLPLLLLLLLLPRAGRPLDLADYTYDLGEEDAPELLNYKDPCKAAAFLGDIALDEEDLRAFQVQQAAVLRQQTARRPSIKAAGNSSALGGQGTSGQPQRESRGRWRGRPRSRRAATSRPERVWPDGVIPFVIGGNFTGSQRAVFRQAMRHWEKHTCVTFLERTDEDSYIVFTYRPCGCCSYVGRRGGGPQAISIGKNCDKFGIVVHELGHVIGFWHEHTRPDRDRHVSIVRENIQPGQEYNFLKMEVQEVESLGETYDFDSIMHYARNTFSRGIFLDTIVPKYEVNGVKPSIGQRTRLSKGDIAQARKLYKCPACGETLQDSTGNFSSPEYPNGYSAHMHCVWRISVTPGEKIILNFTSMDLYRSRLCWYDYVEVRDGFWRKAPLRGRFCGGKLPEPIVSTDSRLWVEFRSSSNWVGKGFFAVYEAICGGDVKKDNGHIQSPNYPDDYRPSKVCIWRIQVSEGFHVGLTFQSFEIERHDSCAYDYLEVRDGHSESSNLIGRYCGYEKPDDIKSTSSRLWLKFVSDGSINKAGFAVNFFKEVDECSRPNRGGCEQRCLNTLGSYKCSCDPGYELAPDKRRCEAACGGFLTKLNGSITSPGWPKEYPPNKNCIWQLVAPTQYRISLQFDFFETEGNDVCKYDFVEVRSGLTADSKLHGKFCGSEKPEVITSQYNNMRVEFKSDNTVSKKGFKAHFFSDKDECSKDNGGCQQDCVNTFGSYECQCRSGFVLHDNKHDCKEAGCEHKVTSTSGTITSPNWPDKYPSKKECTWAISSTPGHRVKLTFVEMDIESQPECAYDHLEVFDGRDAKAPVLGRFCGSKKPEPVLATGNRMFLRFYSDNSVQRKGFQASHSTECGGQVRADVKTKDLYSHAQFGDNNYPGGVDCEWVIVAEEGYGVELVFQTFEVEEETDCGYDYIELFDGYDSTAPRLGRYCGSGPPEEVYSAGDSVLVKFHSDDTISKKGFHLRYTSTKFQDTLHSRK.

An N-terminal signal peptide occupies residues M1–R25. The propeptide occupies A26–R125. A disordered region spans residues A86–P131. Positions G95–Q110 are enriched in polar residues. A glycan (N-linked (GlcNAc...) asparagine) is linked at N96. Residues R116 to A127 show a composition bias toward basic residues. In terms of domain architecture, Peptidase M12A spans A126–P325. N147 is a glycosylation site (N-linked (GlcNAc...) asparagine). 4 cysteine pairs are disulfide-bonded: C168-C324, C188-C210, C190-C191, and C327-C353. H218 provides a ligand contact to Zn(2+). E219 is an active-site residue. Residues H222 and H228 each coordinate Zn(2+). CUB domains are found at residues C327–I439 and C440–K551. N-linked (GlcNAc...) asparagine glycosylation is found at N337 and N368. Disulfide bonds link C380–C402, C440–C466, C493–C515, C556–C568, C564–C577, C579–C592, C596–C622, C649–C671, C712–C723, C719–C732, C734–C747, C752–C778, C805–C827, C865–C895, and C922–C944. The 42-residue stretch at E552–E593 folds into the EGF-like 1; calcium-binding domain. Positions C596–S707 constitute a CUB 3 domain. The N-linked (GlcNAc...) asparagine glycan is linked to N604. Residues D708–K748 form the EGF-like 2; calcium-binding domain. CUB domains follow at residues C752 to E864 and C865 to T981. Residues R939 and R942 each carry the omega-N-methylarginine modification.

Interacts with POSTN, the interaction promotes deposition on the extracellular matrix. Zn(2+) serves as cofactor. As to expression, at high levels in embryonic maternal deciduum and floor plate region of the neural tube. Less in developing membranous and endochondral bone, submucosa of intestine, dermis of skin and the mesenchyme of spleen and lung.

It localises to the golgi apparatus. Its subcellular location is the trans-Golgi network. It is found in the secreted. The protein localises to the extracellular space. The protein resides in the extracellular matrix. The catalysed reaction is Cleavage of the C-terminal propeptide at Ala-|-Asp in type I and II procollagens and at Arg-|-Asp in type III.. Its activity is regulated as follows. Activity is increased by the procollagen C-endopeptidase enhancer protein. Its function is as follows. Metalloprotease that plays key roles in regulating the formation of the extracellular matrix (ECM) via processing of various precursor proteins into mature functional enzymes or structural proteins. Thereby participates in several developmental and physiological processes such as cartilage and bone formation, muscle growth and homeostasis, wound healing and tissue repair. Roles in ECM formation include cleavage of the C-terminal propeptides from procollagens such as procollagen I, II and III or the proteolytic activation of the enzyme lysyl oxidase LOX, necessary to formation of covalent cross-links in collagen and elastic fibers. Additional substrates include matricellular thrombospondin-1/THBS1 whose cleavage leads to cell adhesion disruption and TGF-beta activation. The polypeptide is Bone morphogenetic protein 1 (Bmp1) (Mus musculus (Mouse)).